Reading from the N-terminus, the 496-residue chain is MELESSPPLPPHVMLVSFPGQGHVNPLLRLGKLLASKGLLITFVTTESWGKKMRISNKIQDRVLKPVGKGYLRYDFFDDGLPEDDEASRTNLTILRPHLELVGKREIKNLVKRYKEVTKQPVTCLINNPFVSWVCDVAEDLQIPCAVLWVQSCACLAAYYYYHHNLVDFPTKTEPEIDVQISGMPLLKHDEIPSFIHPSSPHSALREVIIDQIKRLHKTFSIFIDTFNSLEKDIIDHMSTLSLPGVIRPLGPLYKMAKTVAYDVVKVNISEPTDPCMEWLDSQPVSSVVYISFGTVAYLKQEQIDEIAYGVLNADVTFLWVIRQQELGFNKEKHVLPEEVKGKGKIVEWCSQEKVLSHPSVACFVTHCGWNSTMEAVSSGVPTVCFPQWGDQVTDAVYMIDVWKTGVRLSRGEAEERLVPREEVAERLREVTKGEKAIELKKNALKWKEEAEAAVARGGSSDRNLEKFVEKLGAKPVGKVQNGSHNHVLAGSIKSF.

The active-site Proton acceptor is His-23. Residue His-23 coordinates an anthocyanidin. 6 residues coordinate UDP-alpha-D-glucose: Gln-352, His-367, Trp-370, Asn-371, Ser-372, and Glu-375. Residue Gly-390 participates in an anthocyanidin binding. The UDP-alpha-D-glucose site is built by Asp-391 and Gln-392.

It belongs to the UDP-glycosyltransferase family. Expressed in roots, cotyledons, leaf veins and trichomes.

The catalysed reaction is (E)-sinapate + UDP-alpha-D-glucose = 1-O-(trans-sinapoyl)-beta-D-glucose + UDP. Its function is as follows. Sinapate glucosyltransferase (SGT) required for the biosynthesis of the glucose ester sinapoylglucose and subsequently sinapoylmalate and sinapoylcholine. Is the major SGT activity in plant. Plays an important role in sinapoylation of anthocyanins. Sinapoylglucose produced by UGT84A2 is a significant source of sinapoyl moieties for anthocyanins. Indole-3-butyric acid (IBA)-specific glucosyltransferase that catalyzes the glucosylation of the auxin IBA, but not indole-3-acetic acid (IAA). May be involved in flowering regulation through IBA-mediated transcriptional repression of the auxin-response factors ARF6 and ARF8 and downstream flowering pathway genes. Can glucosylate the phytotoxic xenobiotic compound 2,4,5-trichlorophenol (TCP). The sequence is that of UDP-glycosyltransferase 84A2 from Arabidopsis thaliana (Mouse-ear cress).